A 79-amino-acid polypeptide reads, in one-letter code: Acyl carrier protein (79 aa).

A Carrier domain is found at 2–77; the sequence is STIEERVKKI…QAIDYVKVHV (76 aa). O-(pantetheine 4'-phosphoryl)serine is present on S37.

It belongs to the acyl carrier protein (ACP) family. In terms of processing, 4'-phosphopantetheine is transferred from CoA to a specific serine of apo-ACP by AcpS. This modification is essential for activity because fatty acids are bound in thioester linkage to the sulfhydryl of the prosthetic group.

Its subcellular location is the cytoplasm. Its pathway is lipid metabolism; fatty acid biosynthesis. Its function is as follows. Carrier of the growing fatty acid chain in fatty acid biosynthesis. The protein is Acyl carrier protein of Xanthomonas albilineans.